The sequence spans 247 residues: Putative cyclin-T1-1 (247 aa).

This sequence belongs to the cyclin family. Cyclin T subfamily.

This Arabidopsis thaliana (Mouse-ear cress) protein is Putative cyclin-T1-1 (CYCT1-1).